The primary structure comprises 161 residues: V-type proton ATPase 16 kDa proteolipid subunit c 2 (161 aa).

At 1-15 (MSYDLETAERAAYAP) the chain is on the lumenal side. The helical transmembrane segment at 16 to 36 (FFGYMGAASAQIFTVLGAAYG) threads the bilayer. Residues 37 to 58 (TAKSAVGICSMGVMRPELIMKS) are Cytoplasmic-facing. A helical membrane pass occupies residues 59-79 (VIPVIMAGIIGIYGLVVAMVL). At 80-98 (KGKVTSASAGYDLNKGFAH) the chain is on the lumenal side. The chain crosses the membrane as a helical span at residues 99–119 (LAAGLTCGLCGLGAGYAIGIV). At 120 to 137 (GDAGVRGTAQQPRLFVGM) the chain is on the cytoplasmic side. The chain crosses the membrane as a helical span at residues 138 to 158 (ILILIFSEVLGLYGMIVALIL). Residues 159–161 (GTS) lie on the Lumenal side of the membrane.

This sequence belongs to the V-ATPase proteolipid subunit family. As to quaternary structure, V-ATPase is a heteromultimeric enzyme made up of two complexes: the ATP-hydrolytic V1 complex and the proton translocation V0 complex. The V1 complex consists of three catalytic AB heterodimers that form a heterohexamer, three peripheral stalks each consisting of EG heterodimers, one central rotor including subunits D and F, and the regulatory subunits C and H. The proton translocation complex V0 consists of the proton transport subunit a, a ring of proteolipid subunits c9c'', rotary subunit d, subunits e and f, and the accessory subunits vah-19/Ac45 and vah-20/PRR. As to expression, expressed in the H-shaped excretory cell, rectum, and a pair of cells posterior to the anus.

It localises to the membrane. Its function is as follows. Proton-conducting pore forming subunit of the V0 complex of vacuolar(H+)-ATPase (V-ATPase), a multisubunit enzyme composed of a peripheral complex (V1) that hydrolyzes ATP and a membrane integral complex (V0) that translocates protons. V-ATPase is responsible for acidifying and maintaining the pH of intracellular compartments and in some cell types, is targeted to the plasma membrane, where it is responsible for acidifying the extracellular environment. Involved in necrotic cell death. Required along with other vacuolar ATPase components for the removal of protein aggregates which form in immature oocytes in the distal gonad. This removal occurs as the oocytes mature and move to the proximal gonad, is triggered by the introduction of sperm through mating and occurs before fertilization. The introduction of sperm triggers V-ATPase accumulation in proximal oocytes and induces lysosomal acidification which leads to engulfing of protein aggregates by lysosomes and subsequent clearance of the aggregates. Lysosomal acidification also leads to changes in mitochondrial morphology and function. Mitochondria in distal immature oocytes are fragmented, produce high levels of reactive oxygen species (ROS) and have high membrane potential, indicative of metabolic inactivity. In contrast, mitochondria in proximal mature oocytes are tubular with lower ROS levels and membrane potential, indicative of an active metabolic state required for aggregate mobilization before clearance. The polypeptide is V-type proton ATPase 16 kDa proteolipid subunit c 2 (Caenorhabditis elegans).